Consider the following 447-residue polypeptide: UDP-N-acetylmuramate--L-alanine ligase (447 aa).

115 to 121 (GAHGKTS) provides a ligand contact to ATP.

This sequence belongs to the MurCDEF family.

The protein localises to the cytoplasm. The catalysed reaction is UDP-N-acetyl-alpha-D-muramate + L-alanine + ATP = UDP-N-acetyl-alpha-D-muramoyl-L-alanine + ADP + phosphate + H(+). The protein operates within cell wall biogenesis; peptidoglycan biosynthesis. In terms of biological role, cell wall formation. This is UDP-N-acetylmuramate--L-alanine ligase from Streptococcus thermophilus (strain CNRZ 1066).